We begin with the raw amino-acid sequence, 329 residues long: GTP 3',8-cyclase (329 aa).

The Radical SAM core domain occupies 8–234; the sequence is VFARKFYYLR…QLRQRSDGPA (227 aa). R17 lines the GTP pocket. [4Fe-4S] cluster contacts are provided by C24 and C28. An S-adenosyl-L-methionine-binding site is contributed by Y30. Position 31 (C31) interacts with [4Fe-4S] cluster. A GTP-binding site is contributed by R68. G72 serves as a coordination point for S-adenosyl-L-methionine. Residue T99 coordinates GTP. Position 123 (S123) interacts with S-adenosyl-L-methionine. Position 160 (K160) interacts with GTP. M194 is an S-adenosyl-L-methionine binding site. Positions 257 and 260 each coordinate [4Fe-4S] cluster. 262-264 contacts GTP; that stretch reads RLR. A [4Fe-4S] cluster-binding site is contributed by C274.

The protein belongs to the radical SAM superfamily. MoaA family. In terms of assembly, monomer and homodimer. [4Fe-4S] cluster serves as cofactor.

The catalysed reaction is GTP + AH2 + S-adenosyl-L-methionine = (8S)-3',8-cyclo-7,8-dihydroguanosine 5'-triphosphate + 5'-deoxyadenosine + L-methionine + A + H(+). Its pathway is cofactor biosynthesis; molybdopterin biosynthesis. Functionally, catalyzes the cyclization of GTP to (8S)-3',8-cyclo-7,8-dihydroguanosine 5'-triphosphate. This chain is GTP 3',8-cyclase, found in Shigella flexneri.